Reading from the N-terminus, the 315-residue chain is Lipoyl synthase (315 aa).

[4Fe-4S] cluster-binding residues include C62, C67, C73, C88, C92, C95, and S302. Residues 74-291 (FNHGAATFMI…KKIALKLGFS (218 aa)) form the Radical SAM core domain.

This sequence belongs to the radical SAM superfamily. Lipoyl synthase family. The cofactor is [4Fe-4S] cluster.

The protein resides in the cytoplasm. It carries out the reaction [[Fe-S] cluster scaffold protein carrying a second [4Fe-4S](2+) cluster] + N(6)-octanoyl-L-lysyl-[protein] + 2 oxidized [2Fe-2S]-[ferredoxin] + 2 S-adenosyl-L-methionine + 4 H(+) = [[Fe-S] cluster scaffold protein] + N(6)-[(R)-dihydrolipoyl]-L-lysyl-[protein] + 4 Fe(3+) + 2 hydrogen sulfide + 2 5'-deoxyadenosine + 2 L-methionine + 2 reduced [2Fe-2S]-[ferredoxin]. Its pathway is protein modification; protein lipoylation via endogenous pathway; protein N(6)-(lipoyl)lysine from octanoyl-[acyl-carrier-protein]: step 2/2. In terms of biological role, catalyzes the radical-mediated insertion of two sulfur atoms into the C-6 and C-8 positions of the octanoyl moiety bound to the lipoyl domains of lipoate-dependent enzymes, thereby converting the octanoylated domains into lipoylated derivatives. The protein is Lipoyl synthase of Ruthia magnifica subsp. Calyptogena magnifica.